Consider the following 224-residue polypeptide: Putative ankyrin repeat protein R845 (224 aa).

8 ANK repeats span residues 1 to 14 (MVEYLVSLGADVRS), 15 to 44 (NYDHAIKSAFENGHLQVIKYLISLGSDVSM), 46 to 74 (YDYILLRASRNGYIDVVKYLIEQGVDPRT), 75 to 104 (NNDKAVRKASKNGRLEIVEYLVTLGADIRI), 105 to 134 (DNDSAVRWASKNGHIKTVEFLVAKGADIRA), 136 to 164 (NDYSLRHSSKHGHIKMVEYLVAQGADVRA), 165 to 194 (DNDYAIKWASGKGHLEVVKYLVEKGADFRA), and 196 to 224 (NDCAVKWASQTGRVEIVEYLVSKGAVCPY).

The protein is Putative ankyrin repeat protein R845 of Acanthamoeba polyphaga mimivirus (APMV).